Here is a 302-residue protein sequence, read N- to C-terminus: Pentatricopeptide repeat-containing protein At4g38150 (302 aa).

A compositionally biased stretch (polar residues) spans 26 to 40 (SATRFLSTGDNGQVD). 2 disordered regions span residues 26–82 (SATR…TTLS) and 94–116 (VNQDSRETPKPEQYPQEPLPPPE). Over residues 54–67 (LRGERSSNSHREPP) the composition is skewed to basic and acidic residues. 4 PPR repeats span residues 130 to 164 (LIPNAVAMLDGLCKDGLVQEAMKLFGLMRDKGTIP), 165 to 199 (EVVIYTAVVEAFCKAHKIEDAKRIFRKMQNNGIAP), 200 to 234 (NAFSYGVLVQGLYNCNMLDDAVAFCSEMLESGHSP), and 235 to 269 (NVPTFVELVDALCRVKGVEQAQSAIDTLNQKGFAV).

Belongs to the PPR family. P subfamily.

The sequence is that of Pentatricopeptide repeat-containing protein At4g38150 from Arabidopsis thaliana (Mouse-ear cress).